Consider the following 95-residue polypeptide: Cystatin-A2 (95 aa).

The Secondary area of contact signature appears at 47–51 (QLVNG).

This sequence belongs to the cystatin family.

The protein resides in the cytoplasm. In terms of biological role, intracellular thiol proteinase inhibitor. Inhibits cathepsin B, but not papain. This chain is Cystatin-A2 (cpiB), found in Dictyostelium discoideum (Social amoeba).